The sequence spans 197 residues: MIPIVIEESGRGERAFDIYSRLLRERIIFLGEPVTSDSANRIVAQMLFLEAEDPEKDIYLYINSPGGSVYDGLGIFDTMQHVKPDVQTVCVGLAASMGAFLLCAGAMGKRSSLQHSRIMIHQPLGGARGQASDIRIQADEILFLKDRLNRVLADRTGQPLERIQEDTDRDFFMSPAEAVGYGLVDSVIDKRPVHSVN.

The active-site Nucleophile is serine 96. The active site involves histidine 121.

The protein belongs to the peptidase S14 family. As to quaternary structure, fourteen ClpP subunits assemble into 2 heptameric rings which stack back to back to give a disk-like structure with a central cavity, resembling the structure of eukaryotic proteasomes.

Its subcellular location is the cytoplasm. It catalyses the reaction Hydrolysis of proteins to small peptides in the presence of ATP and magnesium. alpha-casein is the usual test substrate. In the absence of ATP, only oligopeptides shorter than five residues are hydrolyzed (such as succinyl-Leu-Tyr-|-NHMec, and Leu-Tyr-Leu-|-Tyr-Trp, in which cleavage of the -Tyr-|-Leu- and -Tyr-|-Trp bonds also occurs).. Functionally, cleaves peptides in various proteins in a process that requires ATP hydrolysis. Has a chymotrypsin-like activity. Plays a major role in the degradation of misfolded proteins. The polypeptide is ATP-dependent Clp protease proteolytic subunit 3 (Prochlorococcus marinus (strain MIT 9313)).